The sequence spans 244 residues: 1-(5-phosphoribosyl)-5-[(5-phosphoribosylamino)methylideneamino] imidazole-4-carboxamide isomerase (244 aa).

The active-site Proton acceptor is the Asp-12. The active-site Proton donor is the Asp-131.

Belongs to the HisA/HisF family.

It localises to the cytoplasm. It carries out the reaction 1-(5-phospho-beta-D-ribosyl)-5-[(5-phospho-beta-D-ribosylamino)methylideneamino]imidazole-4-carboxamide = 5-[(5-phospho-1-deoxy-D-ribulos-1-ylimino)methylamino]-1-(5-phospho-beta-D-ribosyl)imidazole-4-carboxamide. It participates in amino-acid biosynthesis; L-histidine biosynthesis; L-histidine from 5-phospho-alpha-D-ribose 1-diphosphate: step 4/9. This is 1-(5-phosphoribosyl)-5-[(5-phosphoribosylamino)methylideneamino] imidazole-4-carboxamide isomerase from Nocardioides sp. (strain ATCC BAA-499 / JS614).